The primary structure comprises 237 residues: 5'-methylthioadenosine/S-adenosylhomocysteine nucleosidase (237 aa).

Glu-12 (proton acceptor) is an active-site residue. Substrate contacts are provided by residues Ala-78, Ile-152, and 173-174 (ME). Asp-197 serves as the catalytic Proton donor.

The protein belongs to the PNP/UDP phosphorylase family. MtnN subfamily. In terms of assembly, homodimer.

The enzyme catalyses S-adenosyl-L-homocysteine + H2O = S-(5-deoxy-D-ribos-5-yl)-L-homocysteine + adenine. It catalyses the reaction S-methyl-5'-thioadenosine + H2O = 5-(methylsulfanyl)-D-ribose + adenine. It carries out the reaction 5'-deoxyadenosine + H2O = 5-deoxy-D-ribose + adenine. It functions in the pathway amino-acid biosynthesis; L-methionine biosynthesis via salvage pathway; S-methyl-5-thio-alpha-D-ribose 1-phosphate from S-methyl-5'-thioadenosine (hydrolase route): step 1/2. Its function is as follows. Catalyzes the irreversible cleavage of the glycosidic bond in both 5'-methylthioadenosine (MTA) and S-adenosylhomocysteine (SAH/AdoHcy) to adenine and the corresponding thioribose, 5'-methylthioribose and S-ribosylhomocysteine, respectively. Also cleaves 5'-deoxyadenosine, a toxic by-product of radical S-adenosylmethionine (SAM) enzymes, into 5-deoxyribose and adenine. Thus, is required for in vivo function of the radical SAM enzymes biotin synthase and lipoic acid synthase, that are inhibited by 5'-deoxyadenosine accumulation. In Hamiltonella defensa subsp. Acyrthosiphon pisum (strain 5AT), this protein is 5'-methylthioadenosine/S-adenosylhomocysteine nucleosidase.